Consider the following 345-residue polypeptide: Variable large protein 23 (345 aa).

An N-terminal signal peptide occupies residues 1 to 18; the sequence is MRKRISAIIMTLFMVLVS. Cysteine 19 is lipidated: N-palmitoyl cysteine. The S-diacylglycerol cysteine moiety is linked to residue cysteine 19.

Belongs to the variable large protein (Vlp) family. Delta subfamily.

It localises to the cell outer membrane. Functionally, the Vlp and Vsp proteins are antigenically distinct proteins, only one vlp or vsp gene is transcriptionally active at any one time. Switching between these genes is a mechanism of host immune response evasion. The sequence is that of Variable large protein 23 from Borrelia hermsii.